The following is an 828-amino-acid chain: Deubiquitinase MYSM1 (828 aa).

The span at 1–12 (MAAEEADVDIEG) shows a compositional bias: acidic residues. The interval 1 to 31 (MAAEEADVDIEGDVVAAAGAQPGSGENTASV) is disordered. Position 110 is a phosphoserine (serine 110). The region spanning 116-167 (SYSVKWTIEEKELFEQGLAKFGRRWTKISKLIGSRTVLQVKSYARQYFKNKV) is the SANT domain. Lysine 187 is covalently cross-linked (Glycyl lysine isopeptide (Lys-Gly) (interchain with G-Cter in SUMO2)). Serine 218 carries the phosphoserine modification. Threonine 236 carries the post-translational modification Phosphothreonine. Residues serine 242, serine 267, and serine 340 each carry the phosphoserine modification. The SWIRM domain occupies 372–470 (LKPPEQEIEI…FGCEQAVYNR (99 aa)). In terms of domain architecture, MPN spans 577–709 (VKVASEALLI…PLPYSQITCL (133 aa)). Zn(2+) is bound by residues histidine 656, histidine 658, and aspartate 669. The JAMM motif signature appears at 656–669 (HSHPAFDPNPSLRD). Residues 774–778 (LQKLL) carry the LXXLL motif motif.

The protein belongs to the peptidase M67A family. MYSM1 subfamily. As to quaternary structure, component of a large chromatin remodeling complex, at least composed of MYSM1, PCAF, RBM10 and KIF11/TRIP5. Binds histones. Interacts with NFIL3; this interaction is critical for their correct recruitment to the ID2 locus during natural killer cell maturation.

The protein resides in the nucleus. It is found in the cytoplasm. Functionally, metalloprotease with deubiquitinase activity that plays important regulator roles in hematopoietic stem cell function, blood cell production and immune response. Participates in the normal programming of B-cell responses to antigen after the maturation process. Within the cytoplasm, plays critical roles in the repression of innate immunity and autoimmunity. Removes 'Lys-63'-linked polyubiquitins from TRAF3 and TRAF6 complexes. Attenuates NOD2-mediated inflammation and tissue injury by promoting 'Lys-63'-linked deubiquitination of RIPK2 component. Suppresses the CGAS-STING1 signaling pathway by cleaving STING1 'Lys-63'-linked ubiquitin chains. In the nucleus, acts as a hematopoietic transcription regulator derepressing a range of genes essential for normal stem cell differentiation including EBF1 and PAX5 in B-cells, ID2 in NK-cell progenitor or FLT3 in dendritic cell precursors. Deubiquitinates monoubiquitinated histone H2A, a specific tag for epigenetic transcriptional repression, leading to dissociation of histone H1 from the nucleosome. The protein is Deubiquitinase MYSM1 (MYSM1) of Homo sapiens (Human).